The primary structure comprises 1639 residues: MRGEDSDLCFDCLDQRINSDFSDQIVFSYGVSDSPLPFGSSAVVKVSDSSEEFSASCSSCESTSSQFILEYLRKDEHGCLAKYVDKFVVKDREGNSNDAVESDECLDCSTSGSQATEDDDTENITCGSVTCEHSGSFSCWRTVAALLPIAQIRKCSASELQKLASSFHYECPEDQILASLHRLIDGKSSGQATHSFLCLLLGLPLLEEKSKLRCLRHPNLSPVLGLLTSSDCLVSVLPKAPYTLENILYYSPSAIKSEWHRNFIIYQLLSALAHLHGLKVSHGDIRPSNILLSDSLWSWLTIYSKPDLGSVDANSSASRRRWCVEGCYSYGLYADLKISSHLDWQTHFDKWWKGELSNFEYLLVLNKLAGRRWGDHTFHPVMPWVIDFSKKPENDSDSGWRDLRKSKWRLAKGDEQLDFTYSTFEFPHHVSDECLSELAVCSYKARRLPLSVLRKAVRSVYEPNEYPSDMQRLYDWTPDECIPEFYCDPRIFCSLHPSMSDLAVPPWASSPDEFIRLHRDALESPHVSSLIHHWIDITFGYKMSGHAAITAKNVMLSSSEPTVPRSVGRRQLFFRPHPVRLGFSREKEQSRNELEMHTFHGFGVDNKRSVILLADEYLEETEEASAFSDHATHLCPKYHLRENLVESPLHVSYSENTKKVNTSLPGTSKNKGLSSRISLNYLLEHMEVRDEASTELQELLQWRQDFCTGNISKDIAGDIFSIGCVLAELYLMKPLFNSVSLATYLEGGDLPELIKELPPPTQVIVEACIEQDWRRRPSAKSLLDSPYFSATVRSAHLFAAPLQLLAKGQTRLCYAASFAKQGVLKVMGTFVAEMCAVYCLPLVTTPLSEDECELAYVLLKEFTKSLTPMAVQRLVLPSIQKILLTTGYSHLKVSLLQDSFVRELWNQIGKRVYLEMIHPLVISNLYNSPDKISASAASVLLIGSSEELGAPVTVHQTILPLISYFGKGICTDGIDVLVRIGRLLGVNFIVKQMLPLLEHVVCFCIDLSSMKKPEPVHSWCSLALSDCLITLDGLVALISDELLIHELTKGRLCLHVRVLMQKNLELRVLQFAATSLMSICQRIGQEMTALHVLPQLKELFDEFAFSEKSTDASDSLSWKIRTAEQKFHPESPIKSRMDLVLLLYPSFASLLGMEKLRQGCPTWLLLEQYLLKHHNWKWEYTGRSSRYNMEARPVLKQGPASKHTPKVLLNGSGRSVPQSQGLRNSNHLKLHIHVPVEGQEAVLNPLVHEPWSWFPSPVTCWDGLDIGRFGNPKDENRWKIRASVLSSARAHHGALRSLVVSEDECTVFTSGIDPGFKGSVQKWELASLSCVSSYHAHEEVVNDIGILSSTGKVASCDGTIHVWNSQTGKLISLFSESPSDQDQASSDPSSKNNSNPCNRHASHGLSSGIFDENLYTCMHYLEYMDQLIVGTGFGALRFIDLARGQKLELWGGEAIESGFTSLVSALCSGGSQTKHGDGASVSPSWIAAGFSSGQCRLFDLRENGFISSWRAHDGYVTKLVAPESHLLVSSSLDKTLRIWDLRKSWTPQPFVVKGHNDGVSGFSIWGKDVISISRNNIGIFSLAKSQDEEEQQQQRIIPQKLYMAEKGGRVKSDLSTICVLPFSRLFIVGAHDGHLRICC.

Residues 206 to 294 form the Protein kinase 1 domain; sequence LEEKSKLRCL…IRPSNILLSD (89 aa). The 273-residue stretch at 336–608 folds into the BEACH domain; the sequence is LKISSHLDWQ…FHGFGVDNKR (273 aa). The region spanning 715–788 is the Protein kinase 2 domain; sequence IAGDIFSIGC…AKSLLDSPYF (74 aa). WD repeat units follow at residues 1290 to 1333 and 1336 to 1373; these read AHHG…CVSS and AHEEVVNDIGILSSTGKVASCDGTIHVWNSQTGKLISL. Over residues 1377-1398 the composition is skewed to low complexity; that stretch reads SPSDQDQASSDPSSKNNSNPCN. The interval 1377 to 1399 is disordered; that stretch reads SPSDQDQASSDPSSKNNSNPCNR. 3 WD repeats span residues 1465 to 1499, 1511 to 1549, and 1609 to 1639; these read ALCSGGSQTKHGDGASVSPSWIAAGFSSGQCRLFD, AHDGYVTKLVAPESHLLVSSSLDKTLRIWDLRKSWTPQP, and RVKSDLSTICVLPFSRLFIVGAHDGHLRICC.

The protein belongs to the protein kinase superfamily. Tyr protein kinase family. As to quaternary structure, interacts (via protein kinase 2 domain) with BCHC1 (via PH-BEACH domain). Weakly expressed in the cotyledons of germinating seedlings. Restricted to the vascular tissues of cotyledons. Detected in root tips, apical meristem, young flower buds and receptacles.

Functionally, may act predominantly to suppress BCHC1, which itself is a negative factor in protein storage vacuole (PSV) trafficking regulation and plant effector triggered immunity (ETI). Required for ETI, but not for cell death. This chain is Protein GFS12, found in Arabidopsis thaliana (Mouse-ear cress).